Consider the following 615-residue polypeptide: Ectoine/glycine betaine/proline transporter EctP (615 aa).

Helical transmembrane passes span 24–44, 62–82, 102–122, 156–176, 207–227, 240–260, 275–295, 329–349, 360–380, 417–437, 463–483, and 489–509; these read FIFSISVGFIVVFVIATIALG, LGWMYIGGVSLVFIFLMGIFA, IVWFCMLFAGGVGAVLMFWGV, FGIHMWVIMALPGLSLGYFIY, LAIVGTTFGIAVSVGLGVLQI, VSWVQLLIILIITAVACISVA, IAMAVALMFFILFTGPTLTLL, WTVFYWAWTICWSPYVGMFVA, FIGGVLALPAIFGVVWFSIFG, LTGIVSAFALVIIVIFFITSI, WACTIGAVAGSLLIISPSSGI, and VVIIVAFPFFLVQFVMMFSLL. Disordered stretches follow at residues 524-562 and 589-615; these read TRQWEKTDTPEKLEEHSSQPAPGYDDEGNPLPMPALEHD and PEEAQEMGSRFKIVEQTRPQSRDEYDI. Basic and acidic residues-rich tracts occupy residues 526-540 and 600-615; these read QWEKTDTPEKLEEHS and KIVEQTRPQSRDEYDI.

Belongs to the BCCT transporter (TC 2.A.15) family.

The protein localises to the cell membrane. Functionally, involved in the uptake of osmoprotectants. Can transport ectoine, proline and glycine betaine. Na(+) is probably the coupling ion. The protein is Ectoine/glycine betaine/proline transporter EctP of Corynebacterium glutamicum (strain ATCC 13032 / DSM 20300 / JCM 1318 / BCRC 11384 / CCUG 27702 / LMG 3730 / NBRC 12168 / NCIMB 10025 / NRRL B-2784 / 534).